Consider the following 677-residue polypeptide: NADPH--cytochrome P450 reductase (677 aa).

Gly-2 bears the N-acetylglycine mark. Over 2-21 (GDSHVDTSSTVSEAVAEEVS) the chain is Lumenal. The helical transmembrane segment at 22–42 (LFSMTDMILFSLIVGLLTYWF) threads the bilayer. Topologically, residues 43–677 (LFRKKKEEVP…KGRYSLDVWS (635 aa)) are cytoplasmic. Ser-63 bears the Phosphoserine mark. Residues 80–224 (IIVFYGSQTG…DFITWREQFW (145 aa)) enclose the Flavodoxin-like domain. Residues 86–91 (SQTGTA), 138–141 (ATYG), 173–182 (LGNKTYEHFN), and Asp-208 contribute to the FMN site. The FAD-binding FR-type domain occupies 279–521 (KNPFLAAVTT…FVRKSQFRLP (243 aa)). Arg-298 lines the NADP(+) pocket. FAD-binding positions include Arg-424, 454 to 457 (RYYS), 472 to 474 (CAV), Tyr-478, and 488 to 491 (GVAT). NADP(+) is bound by residues Thr-535, 596–597 (SR), 602–606 (KVYVQ), and Asp-638. Trp-676 contributes to the FAD binding site.

This sequence belongs to the NADPH--cytochrome P450 reductase family. In the N-terminal section; belongs to the flavodoxin family. It in the C-terminal section; belongs to the flavoprotein pyridine nucleotide cytochrome reductase family. The cofactor is FAD. FMN is required as a cofactor.

It localises to the endoplasmic reticulum membrane. The enzyme catalyses 2 oxidized [cytochrome P450] + NADPH = 2 reduced [cytochrome P450] + NADP(+) + H(+). In terms of biological role, this enzyme is required for electron transfer from NADP to cytochrome P450 in microsomes. It can also provide electron transfer to heme oxygenase and cytochrome B5. This chain is NADPH--cytochrome P450 reductase, found in Homo sapiens (Human).